Here is a 272-residue protein sequence, read N- to C-terminus: MDVFKPEKLFGIIGHPLGHTMSPLLHNWGFAEHKIPAVYMAWPTEPEKVESFMQTFRNLPISGASVTIPHKLSVMDYIDQLTERAESVGAVNTLYWDGDKIVGDNTDAAGVSEPLRPYSDQIKKALLIGAGGAARAAITGLQSLGIKEIFITNRTKSKADDLAAEFKISALDWDARGDQHLDLIVNSTSLGMSGKFEEINPMIMENQDKNTIIFDLVYNPLETVLIRKAKSKGCTVIHGIEMFVHQGLEQFRLWTGIKLDEKKARELLLEKL.

Residues 20-22 and Thr-67 each bind shikimate; that span reads TMS. Lys-71 functions as the Proton acceptor in the catalytic mechanism. An NADP(+)-binding site is contributed by Glu-83. 2 residues coordinate shikimate: Asn-92 and Asp-107. NADP(+) contacts are provided by residues 129–133, 153–158, and Leu-216; these read GAGGA and NRTKSK. Tyr-218 contacts shikimate. Gly-239 contributes to the NADP(+) binding site.

Belongs to the shikimate dehydrogenase family. Homodimer.

It catalyses the reaction shikimate + NADP(+) = 3-dehydroshikimate + NADPH + H(+). It functions in the pathway metabolic intermediate biosynthesis; chorismate biosynthesis; chorismate from D-erythrose 4-phosphate and phosphoenolpyruvate: step 4/7. Its function is as follows. Involved in the biosynthesis of the chorismate, which leads to the biosynthesis of aromatic amino acids. Catalyzes the reversible NADPH linked reduction of 3-dehydroshikimate (DHSA) to yield shikimate (SA). This Maridesulfovibrio salexigens (strain ATCC 14822 / DSM 2638 / NCIMB 8403 / VKM B-1763) (Desulfovibrio salexigens) protein is Shikimate dehydrogenase (NADP(+)).